Consider the following 552-residue polypeptide: Protein FAM234A (552 aa).

Residues 1–22 (MLDHKDLEAEIHPLKNEERKSQ) are compositionally biased toward basic and acidic residues. The segment at 1–40 (MLDHKDLEAEIHPLKNEERKSQENLGNPSKNEDNVKSAPP) is disordered. The Cytoplasmic segment spans residues 1–49 (MLDHKDLEAEIHPLKNEERKSQENLGNPSKNEDNVKSAPPQSRLSRCRA). Position 21 is a phosphoserine (S21). A helical; Signal-anchor for type II membrane protein transmembrane segment spans residues 50–70 (AAFFLSLFLCLFVVFVVSFVI). Over 71–552 (PCPDRPASQR…FSRLRYQSEA (482 aa)) the chain is Extracellular. N-linked (GlcNAc...) asparagine glycosylation is found at N116, N314, N389, and N473.

This sequence belongs to the FAM234 family.

Its subcellular location is the membrane. In Homo sapiens (Human), this protein is Protein FAM234A.